The sequence spans 475 residues: UDP-N-acetylmuramate--L-alanine ligase (475 aa).

114–120 (GTHGKTT) is an ATP binding site.

This sequence belongs to the MurCDEF family.

Its subcellular location is the cytoplasm. It catalyses the reaction UDP-N-acetyl-alpha-D-muramate + L-alanine + ATP = UDP-N-acetyl-alpha-D-muramoyl-L-alanine + ADP + phosphate + H(+). The protein operates within cell wall biogenesis; peptidoglycan biosynthesis. Functionally, cell wall formation. This is UDP-N-acetylmuramate--L-alanine ligase from Bartonella tribocorum (strain CIP 105476 / IBS 506).